The chain runs to 192 residues: UPF0316 protein SSP0880 (192 aa).

A run of 3 helical transmembrane segments spans residues 8-28 (PWLM…CLTM), 40-60 (VAAI…GMVM), and 66-86 (IQNV…GMKI).

It belongs to the UPF0316 family.

Its subcellular location is the cell membrane. The polypeptide is UPF0316 protein SSP0880 (Staphylococcus saprophyticus subsp. saprophyticus (strain ATCC 15305 / DSM 20229 / NCIMB 8711 / NCTC 7292 / S-41)).